The chain runs to 398 residues: Phosphoglycerate kinase (398 aa).

Residues 21–23, Arg36, 59–62, Arg119, and Arg157 contribute to the substrate site; these read DFN and HLGR. ATP-binding positions include Lys208, Gly296, Glu327, and 354–357; that span reads GGDS.

It belongs to the phosphoglycerate kinase family. As to quaternary structure, monomer.

Its subcellular location is the cytoplasm. The catalysed reaction is (2R)-3-phosphoglycerate + ATP = (2R)-3-phospho-glyceroyl phosphate + ADP. Its pathway is carbohydrate degradation; glycolysis; pyruvate from D-glyceraldehyde 3-phosphate: step 2/5. The sequence is that of Phosphoglycerate kinase from Streptococcus pneumoniae serotype 19F (strain G54).